A 1158-amino-acid chain; its full sequence is Phospholipid-transporting ATPase 1 (1158 aa).

A compositionally biased stretch (basic and acidic residues) spans 1–15 (MDPRKSIDKPPHHDP). A disordered region spans residues 1–30 (MDPRKSIDKPPHHDPILGVSSRWSVSSKDN). The Cytoplasmic portion of the chain corresponds to 1–100 (MDPRKSIDKP…TAKYSVFTFL (100 aa)). The chain crosses the membrane as a helical span at residues 101-122 (PRNLFEQFHRVAYIYFLVIAVL). Over 123-127 (NQLPQ) the chain is Extracellular. A helical transmembrane segment spans residues 128–150 (LAVFGRGASIMPLAFVLLVSAIK). At 151 to 329 (DAYEDFRRHR…SRLETRMNLE (179 aa)) the chain is on the cytoplasmic side. The chain crosses the membrane as a helical span at residues 330-351 (IILLSLFLIVLCTIAAATAAVW). The Extracellular portion of the chain corresponds to 352–391 (LRTHRDDLDTILFYRRKDYSERPGGKNYKYYGWGWEIFFT). Residues 392–409 (FFMAVIVYQIMIPISLYI) traverse the membrane as a helical segment. Topologically, residues 410–914 (SMELVRIGQA…HGHWNYQRMG (505 aa)) are cytoplasmic. The active-site 4-aspartylphosphate intermediate is Asp-457. Asp-859 and Asp-863 together coordinate Mg(2+). Residues 915–934 (YMILYNFYRNAVFVLILFWY) form a helical membrane-spanning segment. The Extracellular segment spans residues 935–948 (VLFTCYTLTTAITE). Residues 949-968 (WSSVLYSVIYTAIPTIIIGI) traverse the membrane as a helical segment. At 969–998 (LDKDLGRQTLLDHPQLYGVGQRAEGYSTTL) the chain is on the cytoplasmic side. A helical transmembrane segment spans residues 999–1020 (FWYTMIDTIWQSAAIFFIPMFA). Over 1021–1027 (YWGSTID) the chain is Extracellular. A helical transmembrane segment spans residues 1028 to 1050 (TSSLGDLWTIAAVVVVNLHLAMD). Residues 1051-1056 (VIRWNW) are Cytoplasmic-facing. A helical transmembrane segment spans residues 1057-1077 (ITHAAIWGSIVAACICVIVID). Over 1078–1090 (VIPTLPGYWAIFQ) the chain is Extracellular. Residues 1091–1115 (VGKTWMFWFCLLAIVVTSLLPRFAI) form a helical membrane-spanning segment. The Cytoplasmic segment spans residues 1116-1158 (KFLVEYYRPSDVRIAREAEKLGTFRESQPVGVEMNLIQDPPRR).

This sequence belongs to the cation transport ATPase (P-type) (TC 3.A.3) family. Type IV subfamily. In terms of tissue distribution, expressed in roots, flowers, anthers, leaves, vascular tissues and stems.

Its subcellular location is the endoplasmic reticulum membrane. The protein localises to the cell membrane. The enzyme catalyses ATP + H2O + phospholipidSide 1 = ADP + phosphate + phospholipidSide 2.. In terms of biological role, involved in transport of phospholipids. Contributes to transmembrane flipping of lipids. Has activity with phosphatidylserine and with a much lower efficiency with phosphatidylethanolamine, but not with phosphatidylcholine. In Arabidopsis thaliana (Mouse-ear cress), this protein is Phospholipid-transporting ATPase 1.